The sequence spans 438 residues: Enolase (438 aa).

Gln-163 lines the (2R)-2-phosphoglycerate pocket. The active-site Proton donor is Glu-205. Mg(2+) contacts are provided by Asp-243, Glu-292, and Asp-319. Residues Lys-344, Arg-373, Ser-374, and Lys-395 each coordinate (2R)-2-phosphoglycerate. Lys-344 serves as the catalytic Proton acceptor.

This sequence belongs to the enolase family. The cofactor is Mg(2+).

Its subcellular location is the cytoplasm. The protein resides in the secreted. The protein localises to the cell surface. It carries out the reaction (2R)-2-phosphoglycerate = phosphoenolpyruvate + H2O. It functions in the pathway carbohydrate degradation; glycolysis; pyruvate from D-glyceraldehyde 3-phosphate: step 4/5. In terms of biological role, catalyzes the reversible conversion of 2-phosphoglycerate (2-PG) into phosphoenolpyruvate (PEP). It is essential for the degradation of carbohydrates via glycolysis. This is Enolase from Streptococcus agalactiae.